Consider the following 730-residue polypeptide: ABC transporter G family member 3 (730 aa).

A compositionally biased stretch (low complexity) spans 1–28 (MEEIQSQSDLYRSSSSSASSPTSRVPSS). The segment at 1–100 (MEEIQSQSDL…MASPPVPEGG (100 aa)) is disordered. The segment covering 47-56 (DSPEWEDTPD) has biased composition (acidic residues). Positions 72-91 (NDATTTPVSPSLSKMNSGSM) are enriched in polar residues. Residue Ser-93 is modified to Phosphoserine. The ABC transporter domain occupies 114–356 (IAWKDLTVTM…FSNAGFPCPI (243 aa)). 151–158 (GPAKSGKS) contributes to the ATP binding site. The 213-residue stretch at 441–653 (TRVAVLTWRS…SIEGLLENEY (213 aa)) folds into the ABC transmembrane type-2 domain. The next 6 membrane-spanning stretches (helical) occupy residues 465–485 (LILY…LGHS), 495–515 (AVFV…PSLL), 532–552 (AFVF…LMSI), 575–595 (VLNF…IACI), 600–620 (YWST…AGHF), and 689–709 (MLVL…LLRF).

This sequence belongs to the ABC transporter superfamily. ABCG family. Eye pigment precursor importer (TC 3.A.1.204) subfamily.

The protein localises to the membrane. In Arabidopsis thaliana (Mouse-ear cress), this protein is ABC transporter G family member 3 (ABCG3).